Here is a 1568-residue protein sequence, read N- to C-terminus: Kielin/chordin-like protein (1568 aa).

An N-terminal signal peptide occupies residues M1–G23. Positions G27–S49 are disordered. The span at G35–S49 shows a compositional bias: polar residues. A coiled-coil region spans residues L60–C87. 16 consecutive VWFC domains span residues R136–R193, P194–Q253, Q253–D312, D312–D370, P426–D485, D485–P544, P544–S602, S602–P661, A667–D725, D725–D782, D782–Q841, H900–R959, R959–S1017, S1017–A1085, P1082–R1145, and Q1149–L1209. N-linked (GlcNAc...) asparagine glycosylation occurs at N340. The N-linked (GlcNAc...) asparagine glycan is linked to N499. An N-linked (GlcNAc...) asparagine glycan is attached at N1090. Positions A1213–S1389 constitute a VWFD domain. Cystine bridges form between C1215–C1347 and C1237–C1388. The TIL domain occupies C1483 to C1543.

In terms of assembly, interacts with BMP7 and, by doing so, enhances binding to the type I receptors that contains cytoplasmic serine/threonine protein kinase domains. Also able to interact with activin-A and TGFB1.

Its subcellular location is the secreted. In terms of biological role, enhances bone morphogenetic protein (BMP) signaling in a paracrine manner. In contrast, it inhibits both the activin-A and TGFB1-mediated signaling pathways. This is Kielin/chordin-like protein from Homo sapiens (Human).